The chain runs to 150 residues: Snaclec bothrojaracin subunit beta (150 aa).

A signal peptide spans 1–23 (MGRFIFVSFGLLVVFLSLSGTAA). 3 cysteine pairs are disulfide-bonded: Cys25–Cys36, Cys53–Cys146, and Cys123–Cys138. One can recognise a C-type lectin domain in the interval 32–147 (YEGSCYRVFE…CTKLEYFVCE (116 aa)).

This sequence belongs to the snaclec family. Heterodimer of subunits alpha and beta; disulfide-linked. Expressed by the venom gland.

Its subcellular location is the secreted. Functionally, this potent antithrombotic agent acts in a calcium-independent manner. Exerts its anticoagulant effect by two distinct mechanisms. It binds to activated thrombin through exosite 1, blocking fibrinogen clotting, platelet activation, factor V activation and other effects, and it interacts with prothrombin (F2), decreasing its proteolytic activation -especially in the presence of factor Va. In vivo, intravenous injection before thrombosis induction causes a significant decrease in thrombus weight. Furthermore, BJC shows a prolonged effect by remaining in the plasma bound to prothrombin for at least 12 hours. The sequence is that of Snaclec bothrojaracin subunit beta from Bothrops jararaca (Jararaca).